The sequence spans 327 residues: MTGTTLAATYGPISGADLEAELAQPRIADGDAQDAAVYERDGGAHAPPDGDRADVRRAAGAGDASVRLTRVSKRYGERAVLADVDLSIGRGSFVSIVGRSGCGKSTLLRLVAELETPSAGTLVKRGDGGGALDTRIMYQEARLLPWKTVLQNVMLGLGRRAKDDARAVLDEVGLLARANDWPAQLSGGQRQRVALARALVHRPQLLLLDEPLGALDALTRIEMHALIERLWREHRFTALLVTHDVQEAVALADRVLLIEAGRIAFDQRVPLDRPRARASAAFAALEDRVLQRVLTGSDAAPAAPNAAGPEGASRGRAAPASGLRWAV.

The tract at residues 21–54 (ELAQPRIADGDAQDAAVYERDGGAHAPPDGDRAD) is disordered. Basic and acidic residues predominate over residues 37-54 (VYERDGGAHAPPDGDRAD). The ABC transporter domain occupies 66–285 (VRLTRVSKRY…ARASAAFAAL (220 aa)). 98–105 (GRSGCGKS) is an ATP binding site. The disordered stretch occupies residues 300-327 (APAAPNAAGPEGASRGRAAPASGLRWAV).

This sequence belongs to the ABC transporter superfamily. Aliphatic sulfonates importer (TC 3.A.1.17.2) family. The complex is composed of two ATP-binding proteins (SsuB), two transmembrane proteins (SsuC) and a solute-binding protein (SsuA).

It is found in the cell inner membrane. The enzyme catalyses ATP + H2O + aliphatic sulfonate-[sulfonate-binding protein]Side 1 = ADP + phosphate + aliphatic sulfonateSide 2 + [sulfonate-binding protein]Side 1.. Functionally, part of the ABC transporter complex SsuABC involved in aliphatic sulfonates import. Responsible for energy coupling to the transport system. The chain is Aliphatic sulfonates import ATP-binding protein SsuB from Burkholderia pseudomallei (strain K96243).